Reading from the N-terminus, the 387-residue chain is Galanin receptor type 2 (387 aa).

Topologically, residues 1–28 (MNVSGCPGAGNASQAGGGGGWHPEAVIV) are extracellular. N2 and N11 each carry an N-linked (GlcNAc...) asparagine glycan. A helical membrane pass occupies residues 29–49 (PLLFALIFLVGTVGNTLVLAV). Topologically, residues 50–60 (LLRGGQAVSTT) are cytoplasmic. A helical transmembrane segment spans residues 61 to 81 (NLFILNLGVADLCFILCCVPF). Residues 82 to 99 (QATIYTLDGWVFGSLLCK) lie on the Extracellular side of the membrane. C98 and C175 are disulfide-bonded. Residues 100–121 (AVHFLIFLTMHASSFTLAAVSL) form a helical membrane-spanning segment. Residues 122–141 (DRYLAIRYPLHSRELRTPRN) are Cytoplasmic-facing. Residues 142-162 (ALAAIGLIWGLSLLFSGPYLS) traverse the membrane as a helical segment. Topologically, residues 163–187 (YYRQSQLANLTVCHPAWSAPRRRAM) are extracellular. Residues 188–208 (DICTFVFSYLLPVLVLGLTYA) form a helical membrane-spanning segment. Over 209-237 (RTLRYLWRAVDPVAAGSGARRAKRKVTRM) the chain is Cytoplasmic. A helical membrane pass occupies residues 238 to 258 (ILIVAALFCLCWMPHHALILC). Residues 259 to 260 (VW) are Extracellular-facing. The chain crosses the membrane as a helical span at residues 261 to 281 (FGQFPLTRATYALRILSHLVS). Residues 282 to 387 (YANSCVNPIV…GDSILTVDVA (106 aa)) are Cytoplasmic-facing.

The protein belongs to the G-protein coupled receptor 1 family. Expressed abundantly within the central nervous system in both hypothalamus and hippocampus. In peripheral tissues, the strongest expression was observed in heart, kidney, liver, and small intestine.

The protein resides in the cell membrane. Its function is as follows. Receptor for the hormone galanin and GALP. Receptor for the hormone spexin-1. The activity of this receptor is mediated by G proteins that activate the phospholipase C/protein kinase C pathway (via G(q)) and that inhibit adenylyl cyclase (via G(i)). This Homo sapiens (Human) protein is Galanin receptor type 2 (GALR2).